A 370-amino-acid chain; its full sequence is Peptidyl-prolyl cis-trans isomerase D (370 aa).

A Phosphoserine modification is found at Ser-5. One can recognise a PPIase cyclophilin-type domain in the interval 19–183 (FFDVDIGGER…KLCVIAECGE (165 aa)). Lys-171 is subject to N6-acetyllysine. Residues 185 to 215 (KEGDDGGIFPKDGSGDSHPDFPEDADIDLKD) form a chaperone activity region. Position 198 is a phosphoserine (Ser-198). Residues 214–370 (KDVDKILLIT…EKAVYAKMFA (157 aa)) form an interaction with HSP90AB1 region. TPR repeat units lie at residues 223-256 (TEDL…VDSS), 273-306 (LSCV…DPSN), and 307-340 (TKAL…APED).

The protein belongs to the cyclophilin-type PPIase family. PPIase D subfamily. Identified in ESR1 or NR3C1/GCR steroid receptor-chaperone complexes. Found in HSP90 chaperone complexes with kinase clients LCK or EIF2AK1. Two monomers associate with one HSP90 homodimer. Interacts with HSP90AA1. Interacts with HSP90AB1; PPID and FKBP4 compete for binding to HSP90AB1 and the interaction is mutually exclusive with the PPID:HSPA8 interaction. Interacts with HSPA8; PPID and STIP1 but not FKBP4 compete for binding to HSPA8 and the interaction is mutually exclusive with the PPID:HSP90AB1 interaction. Interacts with S100A1 and S100A2; the interactions dissociate the PPID:HSP90AA1 interaction. Interacts with S100A6. Interacts with MYB, ILF2, XRCC6, RACK1 and RPS3. Interacts with cytoplasmic dynein 1 intermediate chain (DYNC1I1 or DYNC1I2). As to expression, widely expressed.

It localises to the cytoplasm. The protein localises to the nucleus. Its subcellular location is the nucleolus. The protein resides in the nucleoplasm. It catalyses the reaction [protein]-peptidylproline (omega=180) = [protein]-peptidylproline (omega=0). Less sensitive to inhibition by cyclosporin A than is CYP-18. Functionally, PPIase that catalyzes the cis-trans isomerization of proline imidic peptide bonds in oligopeptides and may therefore assist protein folding. Proposed to act as a co-chaperone in HSP90 complexes such as in unligated steroid receptors heterocomplexes. Different co-chaperones seem to compete for association with HSP90 thus establishing distinct HSP90-co-chaperone-receptor complexes with the potential to exert tissue-specific receptor activity control. May have a preference for estrogen receptor complexes and is not found in glucocorticoid receptor complexes. May be involved in cytoplasmic dynein-dependent movement of the receptor from the cytoplasm to the nucleus. May regulate MYB by inhibiting its DNA-binding activity. Involved in regulation of AHR signaling by promoting the formation of the AHR:ARNT dimer; the function is independent of HSP90 but requires the chaperone activity. Involved in regulation of UV radiation-induced apoptosis. Promotes cell viability in anaplastic lymphoma kinase-positive anaplastic large-cell lymphoma (ALK+ ALCL) cell lines. Its function is as follows. (Microbial infection) May be involved in hepatitis C virus (HCV) replication and release. This Homo sapiens (Human) protein is Peptidyl-prolyl cis-trans isomerase D.